A 126-amino-acid chain; its full sequence is Cornifin alpha (126 aa).

Position 2 is an N-acetylserine (Ser-2). 13 repeat units span residues 3–14, 18–29, 31–38, 39–46, 47–54, 55–62, 63–70, 71–78, 79–86, 87–94, 95–102, 103–110, and 111–118. The 2 X 12 AA approximate repeats stretch occupies residues 3 to 29; that stretch reads SQQQKQPCTLPPQLQQHQVKQPCQPPP. Positions 20–43 are disordered; it reads QVKQPCQPPPQEPCVPKTKEPCQP. Positions 31–122 are 11 X 8 AA approximate tandem repeats; sequence EPCVPKTKEP…CQPKVPEPCQ (92 aa). The segment at 104–126 is disordered; it reads PCQSKVPQPCQPKVPEPCQTKQK.

The protein belongs to the cornifin (SPRR) family. In terms of tissue distribution, suprabasal layers of squamous-differentiated tissues such as epidermis, esophagus, tongue and trachea.

Its subcellular location is the cytoplasm. Cross-linked envelope protein of keratinocytes. It is a keratinocyte protein that first appears in the cell cytosol, but ultimately becomes cross-linked to membrane proteins by transglutaminase. All that results in the formation of an insoluble envelope beneath the plasma membrane. This chain is Cornifin alpha, found in Oryctolagus cuniculus (Rabbit).